The chain runs to 208 residues: Large ribosomal subunit protein uL4 (208 aa).

The disordered stretch occupies residues 42-77; the sequence is SMRQGTHKTKTKTEVSGGGRKPWRQKGTGRARQGSI.

The protein belongs to the universal ribosomal protein uL4 family. In terms of assembly, part of the 50S ribosomal subunit.

Functionally, one of the primary rRNA binding proteins, this protein initially binds near the 5'-end of the 23S rRNA. It is important during the early stages of 50S assembly. It makes multiple contacts with different domains of the 23S rRNA in the assembled 50S subunit and ribosome. Forms part of the polypeptide exit tunnel. The protein is Large ribosomal subunit protein uL4 of Spiroplasma kunkelii.